Consider the following 321-residue polypeptide: Glycerol-3-phosphate dehydrogenase [NAD(P)+] (321 aa).

The NADPH site is built by S10, W11, R31, R32, Y47, and K98. Residues K98, G125, and S127 each coordinate sn-glycerol 3-phosphate. Position 129 (A129) interacts with NADPH. Positions 177, 230, 240, 241, and 242 each coordinate sn-glycerol 3-phosphate. Catalysis depends on K177, which acts as the Proton acceptor. R241 is an NADPH binding site. Positions 265 and 267 each coordinate NADPH.

This sequence belongs to the NAD-dependent glycerol-3-phosphate dehydrogenase family.

It localises to the cytoplasm. The catalysed reaction is sn-glycerol 3-phosphate + NAD(+) = dihydroxyacetone phosphate + NADH + H(+). The enzyme catalyses sn-glycerol 3-phosphate + NADP(+) = dihydroxyacetone phosphate + NADPH + H(+). The protein operates within membrane lipid metabolism; glycerophospholipid metabolism. In terms of biological role, catalyzes the reduction of the glycolytic intermediate dihydroxyacetone phosphate (DHAP) to sn-glycerol 3-phosphate (G3P), the key precursor for phospholipid synthesis. In Thermotoga sp. (strain RQ2), this protein is Glycerol-3-phosphate dehydrogenase [NAD(P)+].